Reading from the N-terminus, the 251-residue chain is ATP synthase subunit a (251 aa).

5 helical membrane-spanning segments follow: residues 28–48, 84–104, 130–150, 192–212, and 220–240; these read TDTV…AFFL, IAPF…ISNW, INYV…AGIW, IFAG…IMWA, and FDLF…ILYF.

The protein belongs to the ATPase A chain family. As to quaternary structure, F-type ATPases have 2 components, CF(1) - the catalytic core - and CF(0) - the membrane proton channel. CF(1) has five subunits: alpha(3), beta(3), gamma(1), delta(1), epsilon(1). CF(0) has three main subunits: a(1), b(2) and c(9-12). The alpha and beta chains form an alternating ring which encloses part of the gamma chain. CF(1) is attached to CF(0) by a central stalk formed by the gamma and epsilon chains, while a peripheral stalk is formed by the delta and b chains.

Its subcellular location is the cell membrane. In terms of biological role, key component of the proton channel; it plays a direct role in the translocation of protons across the membrane. This is ATP synthase subunit a from Mycobacterium leprae (strain TN).